Consider the following 149-residue polypeptide: Calmodulin (149 aa).

Alanine 2 is modified (N-acetylalanine). 4 consecutive EF-hand domains span residues 8–43, 44–79, 81–116, and 117–149; these read EQIA…LGQN, PTEA…KMKD, DTEE…LGEK, and LTDE…MMAK. Residues aspartate 21, aspartate 23, aspartate 25, threonine 27, glutamate 32, aspartate 57, aspartate 59, asparagine 61, threonine 63, glutamate 68, aspartate 94, aspartate 96, asparagine 98, and glutamate 105 each contribute to the Ca(2+) site. Lysine 116 is subject to N6,N6,N6-trimethyllysine. 5 residues coordinate Ca(2+): aspartate 130, aspartate 132, aspartate 134, glutamine 136, and glutamate 141.

It belongs to the calmodulin family.

Its function is as follows. Calmodulin mediates the control of a large number of enzymes, ion channels and other proteins by Ca(2+). Among the enzymes to be stimulated by the calmodulin-Ca(2+) complex are a number of protein kinases and phosphatases. The polypeptide is Calmodulin (Karlodinium veneficum (Dinoflagellate)).